The primary structure comprises 659 residues: Centrosomal protein of 76 kDa (659 aa).

Phosphoserine is present on residues S75 and S83.

This sequence belongs to the CEP76 family. Interacts with CCP110 and CEP97.

The protein localises to the cytoplasm. It is found in the cytoskeleton. It localises to the microtubule organizing center. The protein resides in the centrosome. Its subcellular location is the centriole. In terms of biological role, centrosomal protein involved in regulation of centriole duplication. Required to limit centriole duplication to once per cell cycle by preventing centriole reduplication. The sequence is that of Centrosomal protein of 76 kDa (CEP76) from Homo sapiens (Human).